The primary structure comprises 366 residues: Ribosomal RNA large subunit methyltransferase M (366 aa).

S-adenosyl-L-methionine contacts are provided by residues Ser-188, 221-224, Asp-240, Asp-260, and Asp-277; that span reads CPGG. Residue Lys-306 is the Proton acceptor of the active site.

Belongs to the class I-like SAM-binding methyltransferase superfamily. RNA methyltransferase RlmE family. RlmM subfamily. As to quaternary structure, monomer.

It is found in the cytoplasm. It catalyses the reaction cytidine(2498) in 23S rRNA + S-adenosyl-L-methionine = 2'-O-methylcytidine(2498) in 23S rRNA + S-adenosyl-L-homocysteine + H(+). Its function is as follows. Catalyzes the 2'-O-methylation at nucleotide C2498 in 23S rRNA. This is Ribosomal RNA large subunit methyltransferase M from Klebsiella pneumoniae subsp. pneumoniae (strain ATCC 700721 / MGH 78578).